A 207-amino-acid chain; its full sequence is Guanylate kinase (207 aa).

The Guanylate kinase-like domain maps to 4–184 (GLLFIVSAPS…AVSDLYKIIR (181 aa)). 11-18 (APSGTGKS) lines the ATP pocket.

This sequence belongs to the guanylate kinase family.

It is found in the cytoplasm. It catalyses the reaction GMP + ATP = GDP + ADP. Essential for recycling GMP and indirectly, cGMP. This is Guanylate kinase from Buchnera aphidicola subsp. Baizongia pistaciae (strain Bp).